The sequence spans 784 residues: Toll-like receptor 2 (784 aa).

Residues 1 to 20 form the signal peptide; it reads MPRALWTAWVWAVIILSTEG. Residues 21-587 lie on the Extracellular side of the membrane; the sequence is ASDQASSLSC…ARLSLSECHR (567 aa). A disulfide bond links cysteine 30 and cysteine 36. LRR repeat units follow at residues 54 to 77, 78 to 101, 102 to 125, 126 to 150, 151 to 175, 176 to 199, 200 to 223, 224 to 250, 251 to 278, 279 to 308, 309 to 337, 338 to 361, 362 to 388, 389 to 414, 415 to 437, 438 to 457, 458 to 478, 479 to 500, and 501 to 524; these read VKSL…RCVN, LKTL…HLRN, LEYL…SLYV, LKFL…HLPN, LRTL…GLTF, LEEL…SIQN, ISHL…IVSS, LDCL…MSTS, VKKL…YVSG, ILEV…HLGN, VETL…LTGK, VKRV…HLKS, LEYL…AWPF, LQTL…TLEN, LNSL…WPGK, MKQL…CLPQ, TLEI…ILPQ, LKEL…FLPV, and LXVM…SFQQ. N-linked (GlcNAc...) asparagine glycosylation is present at asparagine 114. An N-linked (GlcNAc...) asparagine glycan is attached at asparagine 199. Cysteine 353 and cysteine 382 are disulfide-bonded. A disulfide bridge connects residues cysteine 432 and cysteine 454. A glycan (N-linked (GlcNAc...) asparagine) is linked at asparagine 442. Residues 525–579 enclose the LRRCT domain; the sequence is LKTLEAGGNNFICSCDFLSFTQGQQALGRVLVDWPDDYHCDSPSHVRGQRVQDAR. A helical membrane pass occupies residues 588-608; sequence AAVVSAACCALFLLLLLMGVL. Residues 609–784 are Cytoplasmic-facing; the sequence is CHRFHGLWYM…WLNLRAAIRS (176 aa). The TIR domain maps to 639–782; the sequence is ICYDAFVSYS…GFWLNLRAAI (144 aa). Residue lysine 754 forms a Glycyl lysine isopeptide (Lys-Gly) (interchain with G-Cter in ubiquitin) linkage. The ATG16L1-binding motif motif lies at 761-778; the sequence is YLEWPVDETQQEGFWLNL.

It belongs to the Toll-like receptor family. Interacts with LY96, TLR1 and TLR6 (via extracellular domain). TLR2 seems to exist in heterodimers with either TLR1 or TLR6 before stimulation by the ligand. The heterodimers form bigger oligomers in response to their corresponding ligands as well as further heterotypic associations with other receptors such as CD14 and/or CD36. Binds MYD88 (via TIR domain). Interacts with TICAM1. Interacts with CNPY3. Interacts with ATG16L1. Interacts with PPP1R11. Interacts with TICAM2. Interacts with TIRAP. In terms of processing, ubiquitinated at Lys-754 by PPP1R11, leading to its degradation. Deubiquitinated by USP2. Glycosylation of Asn-442 is critical for secretion of the N-terminal ectodomain of TLR2.

It is found in the membrane. Its subcellular location is the cytoplasmic vesicle. It localises to the phagosome membrane. The protein resides in the membrane raft. In terms of biological role, cooperates with LY96 to mediate the innate immune response to bacterial lipoproteins and other microbial cell wall components. Cooperates with TLR1 or TLR6 to mediate the innate immune response to bacterial lipoproteins or lipopeptides. Acts via MYD88 and TRAF6, leading to NF-kappa-B activation, cytokine secretion and the inflammatory response. May also promote apoptosis in response to lipoproteins. Forms activation clusters composed of several receptors depending on the ligand, these clusters trigger signaling from the cell surface and subsequently are targeted to the Golgi in a lipid-raft dependent pathway. Forms the cluster TLR2:TLR6:CD14:CD36 in response to diacylated lipopeptides and TLR2:TLR1:CD14 in response to triacylated lipopeptides. This chain is Toll-like receptor 2 (TLR2), found in Bos indicus (Zebu).